The following is a 403-amino-acid chain: Phosphoglycerate kinase (403 aa).

Substrate is bound by residues 24 to 26 (DLN), Arg-39, 62 to 65 (HLGR), Arg-121, and Arg-161. Residues Lys-211, Gly-299, Glu-330, and 359–362 (GGDS) each bind ATP.

Belongs to the phosphoglycerate kinase family. As to quaternary structure, monomer.

It localises to the cytoplasm. The catalysed reaction is (2R)-3-phosphoglycerate + ATP = (2R)-3-phospho-glyceroyl phosphate + ADP. Its pathway is carbohydrate degradation; glycolysis; pyruvate from D-glyceraldehyde 3-phosphate: step 2/5. In Rhodococcus opacus (strain B4), this protein is Phosphoglycerate kinase.